We begin with the raw amino-acid sequence, 425 residues long: MQAYFDQLDRVRYEGPQSTNPLAFRHYNPDELVLGKRMEDHLRFAACYWHTFCWNGADMFGVGAFNRPWQQPGEALELAKRKADVAFEFFHKLNVPFYCFHDVDVSPEGASLKEYKNNFAQMVDVLAAKQEQSGVKLLWGTANCFTNPRYGAGAATNPDPEVFSCAATQVVTAMNATHKLGGENYVLWGGREGYETLLNTDLRQEREQIGRFMQMVVEHKHKMGFQGTLLIEPKPQEPTKHQYDYDVATVYGFLKQFGLEKEIKVNIEANHATLAGHSFHHEIATAIALGIFGSVDANRGDAQLGWDTDQFPISVEENALVMYEILKAGGFTTGGLNFDAKVRRQSTDKYDLFYGHIGAMDTMALSLKIAARMVEDGELGQQILKGQLSLGKLAQYAEQHHLAPVHQSGHQELLENLVNRYLFDK.

Catalysis depends on residues H101 and D104. Residues E232, E268, H271, D296, D307, D309, and D339 each contribute to the Mg(2+) site.

The protein belongs to the xylose isomerase family. In terms of assembly, homotetramer. It depends on Mg(2+) as a cofactor.

It is found in the cytoplasm. The catalysed reaction is alpha-D-xylose = alpha-D-xylulofuranose. This chain is Xylose isomerase, found in Salmonella paratyphi A (strain ATCC 9150 / SARB42).